A 437-amino-acid polypeptide reads, in one-letter code: Enolase (437 aa).

Gln162 contributes to the (2R)-2-phosphoglycerate binding site. Glu204 (proton donor) is an active-site residue. 3 residues coordinate Mg(2+): Asp251, Glu297, and Asp324. Residues Lys349, Arg378, Ser379, and Lys400 each contribute to the (2R)-2-phosphoglycerate site. The active-site Proton acceptor is Lys349.

This sequence belongs to the enolase family. Mg(2+) serves as cofactor.

The protein resides in the cytoplasm. It localises to the secreted. It is found in the cell surface. The enzyme catalyses (2R)-2-phosphoglycerate = phosphoenolpyruvate + H2O. Its pathway is carbohydrate degradation; glycolysis; pyruvate from D-glyceraldehyde 3-phosphate: step 4/5. Catalyzes the reversible conversion of 2-phosphoglycerate (2-PG) into phosphoenolpyruvate (PEP). It is essential for the degradation of carbohydrates via glycolysis. In Pelodictyon phaeoclathratiforme (strain DSM 5477 / BU-1), this protein is Enolase.